Consider the following 250-residue polypeptide: Peptidyl-tRNA hydrolase (250 aa).

TRNA is bound at residue Y14. The Proton acceptor role is filled by H19. TRNA is bound by residues F64, N66, and N112. The tract at residues 192–250 (MGDGNQRPGGVKTDPAQLEKAPPKAQSHIRQARQNQKKPNIPESGPMAEMLKKLLGKKD) is disordered. Over residues 219–229 (HIRQARQNQKK) the composition is skewed to polar residues. Basic and acidic residues predominate over residues 241 to 250 (MLKKLLGKKD).

It belongs to the PTH family. As to quaternary structure, monomer.

Its subcellular location is the cytoplasm. It catalyses the reaction an N-acyl-L-alpha-aminoacyl-tRNA + H2O = an N-acyl-L-amino acid + a tRNA + H(+). Functionally, hydrolyzes ribosome-free peptidyl-tRNAs (with 1 or more amino acids incorporated), which drop off the ribosome during protein synthesis, or as a result of ribosome stalling. Its function is as follows. Catalyzes the release of premature peptidyl moieties from peptidyl-tRNA molecules trapped in stalled 50S ribosomal subunits, and thus maintains levels of free tRNAs and 50S ribosomes. This Brucella suis (strain ATCC 23445 / NCTC 10510) protein is Peptidyl-tRNA hydrolase.